A 265-amino-acid chain; its full sequence is tRNA (guanine-N(1)-)-methyltransferase (265 aa).

S-adenosyl-L-methionine is bound by residues Gly110 and 129–134; that span reads LGDFVM. Residues 243–265 form a disordered region; that stretch reads LAAWGAPPPPLPKRRRGAKPNPN. Over residues 254-265 the composition is skewed to basic residues; that stretch reads PKRRRGAKPNPN.

This sequence belongs to the RNA methyltransferase TrmD family. As to quaternary structure, homodimer.

It is found in the cytoplasm. The catalysed reaction is guanosine(37) in tRNA + S-adenosyl-L-methionine = N(1)-methylguanosine(37) in tRNA + S-adenosyl-L-homocysteine + H(+). Specifically methylates guanosine-37 in various tRNAs. The protein is tRNA (guanine-N(1)-)-methyltransferase of Deinococcus geothermalis (strain DSM 11300 / CIP 105573 / AG-3a).